The chain runs to 266 residues: Apolipoprotein A-I (266 aa).

The first 18 residues, 1–18 (MKAVVLTLAVLFLTGSQA), serve as a signal peptide directing secretion. 2 consecutive repeat copies span residues 67 to 88 (LKLL…EQIG) and 89 to 110 (PVTQ…QEMN). The 10 X approximate tandem repeats stretch occupies residues 67-266 (LKLLDNWDSL…DEATKKLNSQ (200 aa)). Met-109 is modified (methionine sulfoxide). The 3; half-length repeat unit spans residues 111–121 (KDLEEVKKKVQ). Repeat copies occupy residues 122-143 (PYLD…QKVA), 144-165 (PLGA…EKLS), 166-187 (PLGE…AQLA), 188-209 (PYSE…EGGG), and 210-231 (AALT…EKAK). Residues 232-242 (PALEDLRQGLL) form a 9; half-length repeat. Repeat unit 10 spans residues 243 to 266 (PVLENFRDSLLAAVDEATKKLNSQ).

Belongs to the apolipoprotein A1/A4/E family. As to quaternary structure, homodimer. Interacts with APOA1BP and CLU. Component of a sperm activating protein complex (SPAP), consisting of APOA1, an immunoglobulin heavy chain, an immunoglobulin light chain and albumin. Interacts with NDRG1. Interacts with SCGB3A2. Interacts with NAXE and YJEFN3. In terms of processing, glycosylated. Post-translationally, palmitoylated. Phosphorylation sites are present in the extracellular medium.

It is found in the secreted. Functionally, participates in the reverse transport of cholesterol from tissues to the liver for excretion by promoting cholesterol efflux from tissues and by acting as a cofactor for the lecithin cholesterol acyltransferase (LCAT). As part of the SPAP complex, activates spermatozoa motility. This Neomonachus schauinslandi (Hawaiian monk seal) protein is Apolipoprotein A-I (APOA1).